Reading from the N-terminus, the 938-residue chain is Isoleucine--tRNA ligase (938 aa).

The 'HIGH' region signature appears at 58–68 (PYANGSIHIGH). Glu561 contacts L-isoleucyl-5'-AMP. The 'KMSKS' region signature appears at 602-606 (KMSKS). Lys605 contacts ATP. 4 residues coordinate Zn(2+): Cys901, Cys904, Cys921, and Cys924.

This sequence belongs to the class-I aminoacyl-tRNA synthetase family. IleS type 1 subfamily. In terms of assembly, monomer. Zn(2+) serves as cofactor.

It is found in the cytoplasm. The enzyme catalyses tRNA(Ile) + L-isoleucine + ATP = L-isoleucyl-tRNA(Ile) + AMP + diphosphate. Functionally, catalyzes the attachment of isoleucine to tRNA(Ile). As IleRS can inadvertently accommodate and process structurally similar amino acids such as valine, to avoid such errors it has two additional distinct tRNA(Ile)-dependent editing activities. One activity is designated as 'pretransfer' editing and involves the hydrolysis of activated Val-AMP. The other activity is designated 'posttransfer' editing and involves deacylation of mischarged Val-tRNA(Ile). In Serratia proteamaculans (strain 568), this protein is Isoleucine--tRNA ligase.